A 261-amino-acid polypeptide reads, in one-letter code: Non-structural protein 2a (261 aa).

Belongs to the coronaviruses ns2a protein family.

The protein localises to the host cytoplasm. Functionally, not essential for virus replication in transformed murine cells. The sequence is that of Non-structural protein 2a from Mus musculus (Mouse).